A 210-amino-acid chain; its full sequence is Large ribosomal subunit protein uL3 (210 aa).

The segment at Lys-123 to Ser-144 is disordered.

The protein belongs to the universal ribosomal protein uL3 family. In terms of assembly, part of the 50S ribosomal subunit. Forms a cluster with proteins L14 and L19.

Its function is as follows. One of the primary rRNA binding proteins, it binds directly near the 3'-end of the 23S rRNA, where it nucleates assembly of the 50S subunit. The polypeptide is Large ribosomal subunit protein uL3 (Alkaliphilus metalliredigens (strain QYMF)).